A 352-amino-acid polypeptide reads, in one-letter code: Heat-inducible transcription repressor HrcA (352 aa).

It belongs to the HrcA family.

Functionally, negative regulator of class I heat shock genes (grpE-dnaK-dnaJ and groELS operons). Prevents heat-shock induction of these operons. The polypeptide is Heat-inducible transcription repressor HrcA (Chlorobium phaeobacteroides (strain BS1)).